A 1155-amino-acid chain; its full sequence is RhoGEF domain-containing protein gxcJ (1155 aa).

5 disordered regions span residues 114–216 (ENNS…NFLK), 259–333 (LNKK…IPSN), 429–460 (LVSQSPPPPQPPFLASASSSSTTTITTTDSLE), 484–508 (LNNESAASSSSLSTTTTTTTTTTTT), and 604–639 (SNSNSSNNNNSNSNNITNSNSSSFSKKNSNNNNNYQ). Composition is skewed to low complexity over residues 115–153 (NNSINDNNNNNNNNNNNNNNNNNNNNNNNNNNNNNTNNN), 161–211 (TITN…NNNN), and 260–303 (NKKS…NNNN). The stretch at 192–257 (NNNNNNNNNN…KDIEKLNSAL (66 aa)) forms a coiled coil. Residues 304-319 (YKPTITSSQTQPSLME) show a composition bias toward polar residues. Basic and acidic residues predominate over residues 320 to 330 (NSKDIDKKEKI). A compositionally biased stretch (low complexity) spans 441 to 457 (FLASASSSSTTTITTTD). Over residues 604-637 (SNSNSSNNNNSNSNNITNSNSSSFSKKNSNNNNN) the composition is skewed to low complexity. The region spanning 700–874 (HRTNLIKEIL…EKIVGTINSQ (175 aa)) is the DH domain. The interval 1084–1155 (SHRLSIPSTS…LVKSLVNIKT (72 aa)) is disordered. Composition is skewed to low complexity over residues 1093-1121 (SSPNNGASLNGNSSSNSSSTSISTVGSPN) and 1128-1137 (QQQQLQQQQQ).

GTPase-activating protein. The polypeptide is RhoGEF domain-containing protein gxcJ (gxcJ) (Dictyostelium discoideum (Social amoeba)).